Here is a 1758-residue protein sequence, read N- to C-terminus: Condensin-2 complex subunit hcp-6 (1758 aa).

Disordered stretches follow at residues 428-501 (DPGA…KAKE), 969-1008 (ENGS…KGGM), 1379-1460 (QKRL…ARLL), and 1500-1656 (SKQA…LSRG). Positions 438-462 (EQNEEEDEEEEGEDEEEEEENEQDD) are enriched in acidic residues. Residues 463-473 (VAVKEEEQSDK) are compositionally biased toward basic and acidic residues. A compositionally biased stretch (acidic residues) spans 474 to 484 (SDEENDGDNEE). Positions 485–501 (NVSKKKEEKKKEKKAKE) are enriched in basic and acidic residues. Residues 969-979 (ENGSSDASTVN) show a composition bias toward polar residues. Over residues 999-1008 (SSQKSSKGGM) the composition is skewed to low complexity. Residues 1326–1385 (CIEHKNDIDEILQDNRQLKDEMMFELQRVKQRTEEANRILDEYLKRVAEFKKQQKRLSKS) adopt a coiled-coil conformation. Over residues 1414 to 1423 (EDQENVEEEV) the composition is skewed to acidic residues. Composition is skewed to basic and acidic residues over residues 1424–1437 (EMRT…DADV) and 1500–1512 (SKQA…KTIV). Polar residues-rich tracts occupy residues 1602-1618 (ISAN…QSTE) and 1640-1651 (VPTSSSGNTEND).

Component of the condensin-2 complex.

It is found in the nucleus. The protein localises to the chromosome. It localises to the centromere. In terms of biological role, chromosomal protein which is recruited to mitotic chromosomes by hcp-3 (CENP-A) and hcp-4 (CENP-C). Involved in chromosome segregation during mitosis, playing a role in chromosome condensation and in maintaining chromosome morphology, rigidity and orientation during mitosis. The polypeptide is Condensin-2 complex subunit hcp-6 (Caenorhabditis elegans).